A 341-amino-acid polypeptide reads, in one-letter code: Methionine import ATP-binding protein MetN (341 aa).

Residues 6–247 form the ABC transporter domain; the sequence is IEIKKLSKNF…PQHQATRHLL (242 aa). 44 to 51 contributes to the ATP binding site; the sequence is GMSGAGKS.

This sequence belongs to the ABC transporter superfamily. Methionine importer (TC 3.A.1.24) family. In terms of assembly, the complex is composed of two ATP-binding proteins (MetN), two transmembrane proteins (MetI) and a solute-binding protein (MetQ).

It is found in the cell inner membrane. It carries out the reaction L-methionine(out) + ATP + H2O = L-methionine(in) + ADP + phosphate + H(+). The catalysed reaction is D-methionine(out) + ATP + H2O = D-methionine(in) + ADP + phosphate + H(+). Part of the ABC transporter complex MetNIQ involved in methionine import. Responsible for energy coupling to the transport system. This chain is Methionine import ATP-binding protein MetN, found in Protochlamydia amoebophila (strain UWE25).